We begin with the raw amino-acid sequence, 323 residues long: Glucokinase (323 aa).

Gly8–Thr13 serves as a coordination point for ATP.

Belongs to the bacterial glucokinase family.

The protein resides in the cytoplasm. It carries out the reaction D-glucose + ATP = D-glucose 6-phosphate + ADP + H(+). This is Glucokinase from Yersinia pseudotuberculosis serotype I (strain IP32953).